A 465-amino-acid chain; its full sequence is Spermidine/putrescine import ATP-binding protein PotA (465 aa).

Residues 1–18 are compositionally biased toward polar residues; it reads MTATSGARTSDARTSGAR. The disordered stretch occupies residues 1–21; sequence MTATSGARTSDARTSGARTSD. The ABC transporter domain occupies 30–264; sequence IELVGVAKDY…PRTRFVAGFI (235 aa). 66–73 is an ATP binding site; the sequence is GPSGCGKS.

This sequence belongs to the ABC transporter superfamily. Spermidine/putrescine importer (TC 3.A.1.11.1) family. As to quaternary structure, the complex is composed of two ATP-binding proteins (PotA), two transmembrane proteins (PotB and PotC) and a solute-binding protein (PotD).

It is found in the cell membrane. The enzyme catalyses ATP + H2O + polyamine-[polyamine-binding protein]Side 1 = ADP + phosphate + polyamineSide 2 + [polyamine-binding protein]Side 1.. Its function is as follows. Part of the ABC transporter complex PotABCD involved in spermidine/putrescine import. Responsible for energy coupling to the transport system. In Frankia alni (strain DSM 45986 / CECT 9034 / ACN14a), this protein is Spermidine/putrescine import ATP-binding protein PotA.